A 427-amino-acid chain; its full sequence is Sperm-associated antigen 1A (427 aa).

The segment at 46-113 is disordered; sequence QKKGPGYREG…GPGSAGESCN (68 aa). TPR repeat units follow at residues 125-158, 167-200, 202-234, 302-335, 336-369, and 371-403; these read LARL…CIEA, CVLY…HPFS, KPLL…DISV, FTIL…KPNE, CAIY…EPKN, and KAFY…DPNV.

It is found in the cytoplasm. It localises to the dynein axonemal particle. May play a role in the cytoplasmic assembly and/or trafficking of the axonemal dynein arms. The sequence is that of Sperm-associated antigen 1A (spag1a) from Danio rerio (Zebrafish).